The chain runs to 396 residues: Putative ribosomal RNA large subunit methyltransferase YwbD (396 aa).

The PUA domain occupies 1–79 (MKLLTLKKAH…KHEQIDQAFF (79 aa)).

It belongs to the methyltransferase superfamily. RlmI family.

It localises to the cytoplasm. This Bacillus subtilis (strain 168) protein is Putative ribosomal RNA large subunit methyltransferase YwbD (ywbD).